The following is a 300-amino-acid chain: Type 1 fimbrin D-mannose specific adhesin (300 aa).

The N-terminal stretch at 1–21 (MKRVITLFAVLLMGWSVNAWS) is a signal peptide.

Belongs to the fimbrial protein family.

It localises to the fimbrium. Functionally, involved in regulation of length and mediation of adhesion of type 1 fimbriae (but not necessary for the production of fimbriae). Adhesin responsible for the binding to D-mannose. It is laterally positioned at intervals in the structure of the type 1 fimbriae. In order to integrate FimH in the fimbriae FimF and FimG are needed. This chain is Type 1 fimbrin D-mannose specific adhesin (fimH), found in Escherichia coli (strain K12).